The primary structure comprises 560 residues: Bifunctional NAD(P)H-hydrate repair enzyme (560 aa).

Positions 1-241 (MLSRLSERCT…WMTAPERMRV (241 aa)) are NAD(P)H-hydrate epimerase. A YjeF N-terminal domain is found at 29-235 (LRDAEPAAAA…SLGLEDWMTA (207 aa)). Positions 77–81 (NNGGD) are NADPHX 1; for epimerase activity. Positions 78 and 145 each coordinate K(+). Positions 149 to 155 (GTGICGP) are NADPHX 1; for epimerase activity. Residues tyrosine 160 and aspartate 178 each coordinate (6S)-NADPHX. Serine 181 lines the K(+) pocket. One can recognise a YjeF C-terminal domain in the interval 249–547 (LDDVYEYFGI…HRVPLIVNAS (299 aa)). The segment at 249–560 (LDDVYEYFGI…PASRQRPSGQ (312 aa)) is ADP-dependent (S)-NAD(P)H-hydrate dehydratase. Glycine 351 provides a ligand contact to (6S)-NADPHX. Residues 417-423 (HPGEAAR) are NADPHX 2; for dehydratase activity. ADP-binding positions include 454–458 (KGPGT) and 475–484 (NAGMASGGMG). Aspartate 485 is a (6S)-NADPHX binding site.

The protein in the N-terminal section; belongs to the NnrE/AIBP family. This sequence in the C-terminal section; belongs to the NnrD/CARKD family. The cofactor is K(+).

It catalyses the reaction (6S)-NADHX + ADP = AMP + phosphate + NADH + H(+). The catalysed reaction is (6S)-NADPHX + ADP = AMP + phosphate + NADPH + H(+). It carries out the reaction (6R)-NADHX = (6S)-NADHX. The enzyme catalyses (6R)-NADPHX = (6S)-NADPHX. In terms of biological role, bifunctional enzyme that catalyzes the epimerization of the S- and R-forms of NAD(P)HX and the dehydration of the S-form of NAD(P)HX at the expense of ADP, which is converted to AMP. This allows the repair of both epimers of NAD(P)HX, a damaged form of NAD(P)H that is a result of enzymatic or heat-dependent hydration. This chain is Bifunctional NAD(P)H-hydrate repair enzyme, found in Leishmania major.